Reading from the N-terminus, the 547-residue chain is Putative laccase-5 (547 aa).

An N-terminal signal peptide occupies residues 1 to 35 (MGTPRGLRNAGSSSSACRFLAAFAVLLALPTLTAG). Plastocyanin-like domains follow at residues 43-159 (NVQM…PKRG) and 170-323 (ELPP…YAPT). N-linked (GlcNAc...) asparagine glycosylation is found at asparagine 48 and asparagine 89. Cu cation is bound by residues histidine 93, histidine 95, histidine 138, and histidine 140. Asparagine 199, asparagine 215, asparagine 251, asparagine 311, asparagine 342, asparagine 349, asparagine 388, asparagine 395, asparagine 405, and asparagine 430 each carry an N-linked (GlcNAc...) asparagine glycan. In terms of domain architecture, Plastocyanin-like 3 spans 408–531 (FVRPRVALLE…SMAWLVNDGP (124 aa)). Cu cation-binding residues include histidine 448, histidine 451, histidine 453, histidine 510, cysteine 511, histidine 512, and histidine 516.

It belongs to the multicopper oxidase family. It depends on Cu cation as a cofactor.

The protein localises to the secreted. It is found in the extracellular space. The protein resides in the apoplast. It carries out the reaction 4 hydroquinone + O2 = 4 benzosemiquinone + 2 H2O. Its function is as follows. Lignin degradation and detoxification of lignin-derived products. The polypeptide is Putative laccase-5 (LAC5) (Oryza sativa subsp. japonica (Rice)).